Here is a 385-residue protein sequence, read N- to C-terminus: Anhydro-N-acetylmuramic acid kinase (385 aa).

12–19 (GTSLDGID) is a binding site for ATP.

The protein belongs to the anhydro-N-acetylmuramic acid kinase family.

The enzyme catalyses 1,6-anhydro-N-acetyl-beta-muramate + ATP + H2O = N-acetyl-D-muramate 6-phosphate + ADP + H(+). It participates in amino-sugar metabolism; 1,6-anhydro-N-acetylmuramate degradation. Its pathway is cell wall biogenesis; peptidoglycan recycling. Its function is as follows. Catalyzes the specific phosphorylation of 1,6-anhydro-N-acetylmuramic acid (anhMurNAc) with the simultaneous cleavage of the 1,6-anhydro ring, generating MurNAc-6-P. Is required for the utilization of anhMurNAc either imported from the medium or derived from its own cell wall murein, and thus plays a role in cell wall recycling. In Bacillus thuringiensis (strain Al Hakam), this protein is Anhydro-N-acetylmuramic acid kinase.